A 341-amino-acid chain; its full sequence is tRNA N6-adenosine threonylcarbamoyltransferase (341 aa).

Residues histidine 111 and histidine 115 each coordinate Fe cation. Substrate contacts are provided by residues leucine 134 to glycine 138, aspartate 167, glycine 180, and asparagine 276. Aspartate 304 contacts Fe cation.

The protein belongs to the KAE1 / TsaD family. Requires Fe(2+) as cofactor.

The protein localises to the cytoplasm. It carries out the reaction L-threonylcarbamoyladenylate + adenosine(37) in tRNA = N(6)-L-threonylcarbamoyladenosine(37) in tRNA + AMP + H(+). Its function is as follows. Required for the formation of a threonylcarbamoyl group on adenosine at position 37 (t(6)A37) in tRNAs that read codons beginning with adenine. Is involved in the transfer of the threonylcarbamoyl moiety of threonylcarbamoyl-AMP (TC-AMP) to the N6 group of A37, together with TsaE and TsaB. TsaD likely plays a direct catalytic role in this reaction. This is tRNA N6-adenosine threonylcarbamoyltransferase from Pseudomonas putida (strain ATCC 47054 / DSM 6125 / CFBP 8728 / NCIMB 11950 / KT2440).